A 467-amino-acid polypeptide reads, in one-letter code: MTKRERIVKSVLAHVPKDAINQFVSRGSTPFSVLIMAAIVGTLAGFVGTYFELAVHFVSETRTEWLRSEIGSVLPLWLAAVLISALLAFIGYFLVHRFAPEAAGSGIPEIEGAMDNIRPVRWWRVLPVKFFGGMGALGSGMVLGREGPTVQMGGAVGRMVTDIFRVKDDDTRHSLLASGAAGGLAAAFNAPLAGIMFVVEEMRPQFRYSLISIRAVIISAIMANIVFRAINGQDAVITMPQYQSPALQTLWLFLLLGALFGVFGVIFNKLITVAQDSFVAIHKNDRKRYLITGSILGGVFGLLLLYVPQLTGGGIALIPDVTTGNYSISILVLLFIGRVVTTLLCFGSGAPGGIFAPMLALGTLFGYAFGASADVLLPTLDIEPGVFAIAGMGALFAATVRAPITGILLVIEMTNNYYLILPLIITCLGAVIVAQLLGGQPIYSQLLHRTLKNDKLRQQDLPENQAS.

Over 1-30 (MTKRERIVKSVLAHVPKDAINQFVSRGSTP) the chain is Cytoplasmic. The chain crosses the membrane as a helical span at residues 31 to 67 (FSVLIMAAIVGTLAGFVGTYFELAVHFVSETRTEWLR). Residues 68–74 (SEIGSVL) lie on the Periplasmic side of the membrane. Residues 75-98 (PLWLAAVLISALLAFIGYFLVHRF) traverse the membrane as a helical segment. The Selectivity filter part_1 signature appears at 104–108 (GSGIP). Residue Ser105 coordinates chloride. An intramembrane region (helical) is located at residues 107 to 114 (IPEIEGAM). The Cytoplasmic portion of the chain corresponds to 115–121 (DNIRPVR). 2 consecutive transmembrane segments (helical) span residues 122–139 (WWRVLPVKFFGGMGALGS) and 146–164 (EGPTVQMGGAVGRMVTDIF). The Selectivity filter part_2 signature appears at 144–148 (GREGP). The Cytoplasmic portion of the chain corresponds to 165-174 (RVKDDDTRHS). 2 intramembrane regions (helical) span residues 175-187 (LLASGAAGGLAAA) and 191-199 (PLAGIMFVV). Over 200–212 (EEMRPQFRYSLIS) the chain is Cytoplasmic. The helical transmembrane segment at 213 to 230 (IRAVIISAIMANIVFRAI) threads the bilayer. Over 231–250 (NGQDAVITMPQYQSPALQTL) the chain is Periplasmic. Residues 251–279 (WLFLLLGALFGVFGVIFNKLITVAQDSFV) traverse the membrane as a helical segment. The Cytoplasmic segment spans residues 280-285 (AIHKND). The chain crosses the membrane as a helical span at residues 286–307 (RKRYLITGSILGGVFGLLLLYV). Over 308–327 (PQLTGGGIALIPDVTTGNYS) the chain is Periplasmic. 2 helical membrane passes run 328–347 (ISILVLLFIGRVVTTLLCFG) and 353–374 (GIFAPMLALGTLFGYAFGASAD). Positions 353–357 (GIFAP) match the Selectivity filter part_3 motif. Residues Ile354 and Phe355 each contribute to the chloride site. The Periplasmic segment spans residues 375–384 (VLLPTLDIEP). The segment at residues 385–399 (GVFAIAGMGALFAAT) is an intramembrane region (helical). Residues 400–402 (VRA) constitute an intramembrane region (note=Loop between two helices). Residues 403–414 (PITGILLVIEMT) constitute an intramembrane region (helical). Residues 415 to 419 (NNYYL) constitute an intramembrane region (note=Loop between two helices). The chain crosses the membrane as a helical span at residues 420-436 (ILPLIITCLGAVIVAQL). Over 437–467 (LGGQPIYSQLLHRTLKNDKLRQQDLPENQAS) the chain is Cytoplasmic. Tyr443 contributes to the chloride binding site.

The protein belongs to the chloride channel (TC 2.A.49) family. ClcA subfamily. As to quaternary structure, homodimer.

It localises to the cell inner membrane. It carries out the reaction 2 chloride(in) + H(+)(out) = 2 chloride(out) + H(+)(in). Proton-coupled chloride transporter. Functions as antiport system and exchanges two chloride ions for 1 proton. Probably acts as an electrical shunt for an outwardly-directed proton pump that is linked to amino acid decarboxylation, as part of the extreme acid resistance (XAR) response. This chain is H(+)/Cl(-) exchange transporter ClcA, found in Vibrio parahaemolyticus serotype O3:K6 (strain RIMD 2210633).